Reading from the N-terminus, the 224-residue chain is Uracil-DNA glycosylase (224 aa).

Aspartate 62 (proton acceptor) is an active-site residue.

The protein belongs to the uracil-DNA glycosylase (UDG) superfamily. UNG family.

The protein localises to the cytoplasm. It carries out the reaction Hydrolyzes single-stranded DNA or mismatched double-stranded DNA and polynucleotides, releasing free uracil.. Its function is as follows. Excises uracil residues from the DNA which can arise as a result of misincorporation of dUMP residues by DNA polymerase or due to deamination of cytosine. The protein is Uracil-DNA glycosylase of Aliivibrio fischeri (strain ATCC 700601 / ES114) (Vibrio fischeri).